The sequence spans 207 residues: Guanylate kinase (207 aa).

The Guanylate kinase-like domain maps to 17 to 197 (GRLVVLAGPS…SCDELVSLLV (181 aa)). ATP is bound at residue 24–31 (GPSAVGKS).

This sequence belongs to the guanylate kinase family.

The protein resides in the cytoplasm. The enzyme catalyses GMP + ATP = GDP + ADP. Its function is as follows. Essential for recycling GMP and indirectly, cGMP. This Rhodococcus jostii (strain RHA1) protein is Guanylate kinase.